The chain runs to 133 residues: L-ectoine synthase (133 aa).

It belongs to the ectoine synthase family.

The catalysed reaction is (2S)-4-acetamido-2-aminobutanoate = L-ectoine + H2O. The protein operates within amine and polyamine biosynthesis; ectoine biosynthesis; L-ectoine from L-aspartate 4-semialdehyde: step 3/3. Catalyzes the circularization of gamma-N-acetyl-alpha,gamma-diaminobutyric acid (ADABA) to ectoine (1,4,5,6-tetrahydro-2-methyl-4-pyrimidine carboxylic acid), which is an excellent osmoprotectant. The protein is L-ectoine synthase of Bordetella petrii (strain ATCC BAA-461 / DSM 12804 / CCUG 43448).